Consider the following 177-residue polypeptide: ATP synthase subunit delta (177 aa).

Belongs to the ATPase delta chain family. F-type ATPases have 2 components, F(1) - the catalytic core - and F(0) - the membrane proton channel. F(1) has five subunits: alpha(3), beta(3), gamma(1), delta(1), epsilon(1). F(0) has three main subunits: a(1), b(2) and c(10-14). The alpha and beta chains form an alternating ring which encloses part of the gamma chain. F(1) is attached to F(0) by a central stalk formed by the gamma and epsilon chains, while a peripheral stalk is formed by the delta and b chains.

It is found in the cell inner membrane. Its function is as follows. F(1)F(0) ATP synthase produces ATP from ADP in the presence of a proton or sodium gradient. F-type ATPases consist of two structural domains, F(1) containing the extramembraneous catalytic core and F(0) containing the membrane proton channel, linked together by a central stalk and a peripheral stalk. During catalysis, ATP synthesis in the catalytic domain of F(1) is coupled via a rotary mechanism of the central stalk subunits to proton translocation. In terms of biological role, this protein is part of the stalk that links CF(0) to CF(1). It either transmits conformational changes from CF(0) to CF(1) or is implicated in proton conduction. The polypeptide is ATP synthase subunit delta (Vibrio alginolyticus).